A 507-amino-acid polypeptide reads, in one-letter code: ATP synthase subunit alpha, chloroplastic (507 aa).

ATP is bound at residue 170–177; that stretch reads GDRQTGKT.

This sequence belongs to the ATPase alpha/beta chains family. F-type ATPases have 2 components, CF(1) - the catalytic core - and CF(0) - the membrane proton channel. CF(1) has five subunits: alpha(3), beta(3), gamma(1), delta(1), epsilon(1). CF(0) has four main subunits: a, b, b' and c.

The protein localises to the plastid. It is found in the chloroplast thylakoid membrane. The catalysed reaction is ATP + H2O + 4 H(+)(in) = ADP + phosphate + 5 H(+)(out). In terms of biological role, produces ATP from ADP in the presence of a proton gradient across the membrane. The alpha chain is a regulatory subunit. This chain is ATP synthase subunit alpha, chloroplastic, found in Dioscorea elephantipes (Elephant's foot yam).